The primary structure comprises 293 residues: MKTLQATFFLVAFVPLVKPAPPIQQDSPKFYEYDTDIVTGSLIQQDYEMLPKDAIKDGTNVSLDTGLRLQADDSELSARPTKDTNLPTCLLCVCLSGSVYCEEIDIEAVPPLPKETAYLYARFNKIKRIAVSDFADITTLRRIDFSGNMIEEIEDGAFSKLLLLEELSLAENRLVKLPVLPPKLTTFNANQNRIKSRGIKNNAFKKLTNLAYLYLGHNALESVPLNLPESLRILHLQHNNITTITDDTFCKSNNTRYIRTRMDEIRMEGNPILLAKHVNAFSCLKTLPVGTYY.

A signal peptide spans 1 to 19; it reads MKTLQATFFLVAFVPLVKP. N-linked (GlcNAc...) asparagine glycosylation is present at N60. 7 LRR repeats span residues 107–126, 127–150, 151–174, 175–194, 195–220, 221–241, and 242–272; these read EAVP…FNKI, KRIA…GNMI, EEIE…ENRL, VKLP…QNRI, KSRG…HNAL, ESVP…HNNI, and TTIT…GNPI. N240 and N253 each carry an N-linked (GlcNAc...) asparagine glycan. Cysteines 250 and 283 form a disulfide.

Belongs to the small leucine-rich proteoglycan (SLRP) family. SLRP class III subfamily. In terms of processing, contains keratan sulfate. As to expression, expressed in many tissues.

The protein resides in the secreted. It is found in the extracellular space. It localises to the extracellular matrix. In terms of biological role, induces bone formation in conjunction with TGF-beta-1 or TGF-beta-2. This Coturnix japonica (Japanese quail) protein is Mimecan (OGN).